Reading from the N-terminus, the 293-residue chain is Ribosomal protein L11 methyltransferase (293 aa).

Residues T145, G166, D188, and N230 each contribute to the S-adenosyl-L-methionine site.

It belongs to the methyltransferase superfamily. PrmA family.

The protein localises to the cytoplasm. It carries out the reaction L-lysyl-[protein] + 3 S-adenosyl-L-methionine = N(6),N(6),N(6)-trimethyl-L-lysyl-[protein] + 3 S-adenosyl-L-homocysteine + 3 H(+). Functionally, methylates ribosomal protein L11. The chain is Ribosomal protein L11 methyltransferase from Pasteurella multocida (strain Pm70).